A 447-amino-acid chain; its full sequence is N-succinylarginine dihydrolase (447 aa).

Substrate-binding positions include 19–28 (AGLSFGNEAS), asparagine 110, and 137–138 (HR). Glutamate 174 is an active-site residue. Arginine 212 is a binding site for substrate. The active site involves histidine 248. Substrate-binding residues include aspartate 250 and asparagine 359. Residue cysteine 365 is the Nucleophile of the active site.

Belongs to the succinylarginine dihydrolase family. Homodimer.

The catalysed reaction is N(2)-succinyl-L-arginine + 2 H2O + 2 H(+) = N(2)-succinyl-L-ornithine + 2 NH4(+) + CO2. It participates in amino-acid degradation; L-arginine degradation via AST pathway; L-glutamate and succinate from L-arginine: step 2/5. In terms of biological role, catalyzes the hydrolysis of N(2)-succinylarginine into N(2)-succinylornithine, ammonia and CO(2). This Salmonella typhimurium (strain LT2 / SGSC1412 / ATCC 700720) protein is N-succinylarginine dihydrolase.